A 1272-amino-acid polypeptide reads, in one-letter code: Magnesium-chelatase subunit H (1272 aa).

Belongs to the Mg-chelatase subunit H family.

It catalyses the reaction protoporphyrin IX + Mg(2+) + ATP + H2O = Mg-protoporphyrin IX + ADP + phosphate + 3 H(+). The protein operates within porphyrin-containing compound metabolism; bacteriochlorophyll biosynthesis (light-independent). Involved in bacteriochlorophyll pigment biosynthesis; introduces a magnesium ion into protoporphyrin IX to yield Mg-protoroporphyrin IX. This chain is Magnesium-chelatase subunit H (bchH), found in Chlorobaculum parvum (strain DSM 263 / NCIMB 8327) (Chlorobium vibrioforme subsp. thiosulfatophilum).